The sequence spans 504 residues: DnaJ homolog subfamily C member 3 (504 aa).

A signal peptide spans 1-31 (MVAPGSVTSRLGSVFPFLLVLVDLQYEGAEC). TPR repeat units lie at residues 37–70 (VEKH…DPDN), 72–104 (IAYY…KMDF), 105–138 (TAAR…NPSE), 154–187 (MQRL…CVWD), 189–221 (ELRE…KNDN), 222–255 (TEAF…DQDH), 268–301 (LNKL…EPGV), 306–339 (IRSK…EPDN), and 340–373 (VNAL…NEND). Cysteine 248 and cysteine 258 are disulfide-bonded. The residue at position 274 (serine 274) is a Phosphoserine. A disulfide bridge connects residues cysteine 313 and cysteine 329. Residues 375–393 (QIREGLEKAQRLLKQSQRR) are flexible linker. In terms of domain architecture, J spans 394 to 462 (DYYKILGVKR…EMRKKFDDGE (69 aa)). The disordered stretch occupies residues 451-481 (DPEMRKKFDDGEDPLDAESQQGGGGNPFHRS).

In terms of assembly, interacts with EIF2AK4/GCN2; this interaction occurs under endoplasmic reticulum (ER) stress, hypothermic and amino acid starving stress conditions and inhibits EIF2AK4/GCN2 kinase activity. Interacts with EIF2AK3. Interacts with EIF2AK2. Forms a trimeric complex with DNAJB1 and HSPA8. Interacts with THAP12.

Its subcellular location is the endoplasmic reticulum. In terms of biological role, involved in the unfolded protein response (UPR) during endoplasmic reticulum (ER) stress. Acts as a negative regulator of the EIF2AK4/GCN2 kinase activity by preventing the phosphorylation of eIF-2-alpha at 'Ser-52' and hence attenuating general protein synthesis under ER stress, hypothermic and amino acid starving stress conditions. Co-chaperone of HSPA8/HSC70, it stimulates its ATPase activity. May inhibit both the autophosphorylation of EIF2AK2/PKR and the ability of EIF2AK2 to catalyze phosphorylation of the EIF2A. May inhibit EIF2AK3/PERK activity. The polypeptide is DnaJ homolog subfamily C member 3 (DNAJC3) (Bos taurus (Bovine)).